A 199-amino-acid polypeptide reads, in one-letter code: dITP/XTP pyrophosphatase (199 aa).

7–12 is a binding site for substrate; sequence TGNKGK. D71 functions as the Proton acceptor in the catalytic mechanism. D71 is a Mg(2+) binding site. Substrate contacts are provided by residues A72, 154–157, K177, and 182–183; these read FGYD and HR.

The protein belongs to the HAM1 NTPase family. As to quaternary structure, homodimer. It depends on Mg(2+) as a cofactor.

The catalysed reaction is XTP + H2O = XMP + diphosphate + H(+). It carries out the reaction dITP + H2O = dIMP + diphosphate + H(+). The enzyme catalyses ITP + H2O = IMP + diphosphate + H(+). Its function is as follows. Pyrophosphatase that catalyzes the hydrolysis of nucleoside triphosphates to their monophosphate derivatives, with a high preference for the non-canonical purine nucleotides XTP (xanthosine triphosphate), dITP (deoxyinosine triphosphate) and ITP. Seems to function as a house-cleaning enzyme that removes non-canonical purine nucleotides from the nucleotide pool, thus preventing their incorporation into DNA/RNA and avoiding chromosomal lesions. This chain is dITP/XTP pyrophosphatase, found in Bdellovibrio bacteriovorus (strain ATCC 15356 / DSM 50701 / NCIMB 9529 / HD100).